Consider the following 348-residue polypeptide: Nicotinate-nucleotide--dimethylbenzimidazole phosphoribosyltransferase (348 aa).

Glu-316 functions as the Proton acceptor in the catalytic mechanism.

This sequence belongs to the CobT family.

It carries out the reaction 5,6-dimethylbenzimidazole + nicotinate beta-D-ribonucleotide = alpha-ribazole 5'-phosphate + nicotinate + H(+). It functions in the pathway nucleoside biosynthesis; alpha-ribazole biosynthesis; alpha-ribazole from 5,6-dimethylbenzimidazole: step 1/2. In terms of biological role, catalyzes the synthesis of alpha-ribazole-5'-phosphate from nicotinate mononucleotide (NAMN) and 5,6-dimethylbenzimidazole (DMB). The sequence is that of Nicotinate-nucleotide--dimethylbenzimidazole phosphoribosyltransferase from Xanthomonas campestris pv. campestris (strain 8004).